Here is a 464-residue protein sequence, read N- to C-terminus: ATP synthase subunit beta (464 aa).

152-159 (GGAGVGKT) contributes to the ATP binding site.

Belongs to the ATPase alpha/beta chains family. As to quaternary structure, F-type ATPases have 2 components, CF(1) - the catalytic core - and CF(0) - the membrane proton channel. CF(1) has five subunits: alpha(3), beta(3), gamma(1), delta(1), epsilon(1). CF(0) has three main subunits: a(1), b(2) and c(9-12). The alpha and beta chains form an alternating ring which encloses part of the gamma chain. CF(1) is attached to CF(0) by a central stalk formed by the gamma and epsilon chains, while a peripheral stalk is formed by the delta and b chains.

Its subcellular location is the cell inner membrane. The catalysed reaction is ATP + H2O + 4 H(+)(in) = ADP + phosphate + 5 H(+)(out). Produces ATP from ADP in the presence of a proton gradient across the membrane. The catalytic sites are hosted primarily by the beta subunits. In Aliarcobacter butzleri (strain RM4018) (Arcobacter butzleri), this protein is ATP synthase subunit beta.